The sequence spans 86 residues: MNSLLMITACFVLIGTVWAKDGYLVDAKGCKKNCYKLGKNDYCNRECRMKHRGGSYGYCYGFGCYCEGLSDSTPTWPLPNKTCSGK.

The signal sequence occupies residues 1–19 (MNSLLMITACFVLIGTVWA). The 65-residue stretch at 20 to 84 (KDGYLVDAKG…TWPLPNKTCS (65 aa)) folds into the LCN-type CS-alpha/beta domain. 4 disulfide bridges follow: Cys-30–Cys-83, Cys-34–Cys-59, Cys-43–Cys-64, and Cys-47–Cys-66. Ser-84 carries the post-translational modification Serine amide.

Belongs to the long (4 C-C) scorpion toxin superfamily. Sodium channel inhibitor family. Beta subfamily. As to expression, expressed by the venom gland.

It is found in the secreted. Its function is as follows. Beta toxins bind voltage-independently at site-4 of sodium channels (Nav) and shift the voltage of activation toward more negative potentials thereby affecting sodium channel activation and promoting spontaneous and repetitive firing. The protein is Toxin Cn1 of Centruroides noxius (Mexican scorpion).